Here is an 853-residue protein sequence, read N- to C-terminus: DNA mismatch repair protein MutS (853 aa).

613–620 contributes to the ATP binding site; sequence GPNMGGKS.

The protein belongs to the DNA mismatch repair MutS family.

This protein is involved in the repair of mismatches in DNA. It is possible that it carries out the mismatch recognition step. This protein has a weak ATPase activity. The chain is DNA mismatch repair protein MutS from Vibrio atlanticus (strain LGP32) (Vibrio splendidus (strain Mel32)).